The sequence spans 440 residues: Probable D-serine dehydratase (440 aa).

Residue K120 is modified to N6-(pyridoxal phosphate)lysine.

The protein belongs to the serine/threonine dehydratase family. DsdA subfamily. The cofactor is pyridoxal 5'-phosphate.

It carries out the reaction D-serine = pyruvate + NH4(+). The polypeptide is Probable D-serine dehydratase (Shouchella clausii (strain KSM-K16) (Alkalihalobacillus clausii)).